The following is a 257-amino-acid chain: MSASRLERRIREAQAAGRPALIPFLTAGFPTKERFWDELEALDAAGADIIEVGVPFSDPVADGPVVAAASQRALESGVTLRWIMDGLAARKGRLRAGLVLMGYLNPFMQYGFERFVSDAADAGVAGCIIPDLPLDEDADLRALLAARDMDLIALVGPNTGEGRMREYAAVASGYVYVVSVMGTTGVRDGLPVEVADTLARARQCFSIPVALGFGISRPAQLEGLSHPPDAVIFGSALLRHLDAGGDAASFMKAWAER.

Active-site proton acceptor residues include Glu-51 and Asp-62.

The protein belongs to the TrpA family. Tetramer of two alpha and two beta chains.

It catalyses the reaction (1S,2R)-1-C-(indol-3-yl)glycerol 3-phosphate + L-serine = D-glyceraldehyde 3-phosphate + L-tryptophan + H2O. It functions in the pathway amino-acid biosynthesis; L-tryptophan biosynthesis; L-tryptophan from chorismate: step 5/5. Its function is as follows. The alpha subunit is responsible for the aldol cleavage of indoleglycerol phosphate to indole and glyceraldehyde 3-phosphate. This Nitratidesulfovibrio vulgaris (strain ATCC 29579 / DSM 644 / CCUG 34227 / NCIMB 8303 / VKM B-1760 / Hildenborough) (Desulfovibrio vulgaris) protein is Tryptophan synthase alpha chain.